We begin with the raw amino-acid sequence, 322 residues long: Thioredoxin reductase (322 aa).

FAD is bound by residues 12–15 (SGPA), 34–42 (EGAVTAGGA), Asn51, and Val84. An intrachain disulfide couples Cys136 to Cys139. 4 residues coordinate NADP(+): His176, Arg182, Ile239, and Tyr259. FAD-binding positions include Asp279 and 286–289 (RQAI). An NADP(+)-binding site is contributed by Arg286.

The protein belongs to the class-II pyridine nucleotide-disulfide oxidoreductase family. Homodimer. FAD is required as a cofactor.

Its subcellular location is the cytoplasm. It carries out the reaction [thioredoxin]-dithiol + NADP(+) = [thioredoxin]-disulfide + NADPH + H(+). The sequence is that of Thioredoxin reductase from Streptomyces coelicolor (strain ATCC BAA-471 / A3(2) / M145).